We begin with the raw amino-acid sequence, 66 residues long: Large ribosomal subunit protein bL35 (66 aa).

Basic residues-rich tracts occupy residues 1–16 and 23–45; these read MPKFKTHRASAKRFKK and KRGHAYTSHRFHGKTKKQRRQLR. A disordered region spans residues 1–66; it reads MPKFKTHRAS…RIRQMLSQMK (66 aa).

This sequence belongs to the bacterial ribosomal protein bL35 family.

This is Large ribosomal subunit protein bL35 from Lacticaseibacillus casei (strain BL23) (Lactobacillus casei).